Here is a 166-residue protein sequence, read N- to C-terminus: MTQEEYILIGKVLGVWGISGGLKIGVLTDFPERFDAGNELLVGRKLYTISQTNWQKAQVIVHLSGIDDIDTALELKDALVEIPASALKELPEGVYYDFQLIGLEVVDLSGVKIGQIKEILHMPSNDIYVSSYGVKEALIPAIKDVVKEINLKTGKIIIDPIPGLLD.

A PRC barrel domain is found at 92-164 (EGVYYDFQLI…KIIIDPIPGL (73 aa)).

The protein belongs to the RimM family. In terms of assembly, binds ribosomal protein uS19.

Its subcellular location is the cytoplasm. Its function is as follows. An accessory protein needed during the final step in the assembly of 30S ribosomal subunit, possibly for assembly of the head region. Essential for efficient processing of 16S rRNA. May be needed both before and after RbfA during the maturation of 16S rRNA. It has affinity for free ribosomal 30S subunits but not for 70S ribosomes. The sequence is that of Ribosome maturation factor RimM from Dehalococcoides mccartyi (strain CBDB1).